A 53-amino-acid chain; its full sequence is Ovomucoid (53 aa).

A Kazal-like domain is found at 3-53 (VDCSEYPKPGCMMERLPLCGSDNKTYNDKCNFCNAVVESNGTLTLNHFGEC). Intrachain disulfides connect Cys5–Cys35, Cys13–Cys32, and Cys21–Cys53. The N-linked (GlcNAc...) asparagine glycan is linked to Asn42.

The protein resides in the secreted. This is Ovomucoid from Turnix sylvaticus (Common buttonquail).